Reading from the N-terminus, the 418-residue chain is MFRRLLIATVVGILAVFAVAGFRHAMLLLEWLFLNNDSGSLVNAATNLSSWRRLLTPALGGLAAGLLLMGWQKFTQQRPHAPTDYMEALQTDGQFDYAASLVKSLASLLVVTSGSAIGREGAMILLAALAASCFAQRFTPRQEWKLWIACGAAAGMAAAYRAPLAGSLFIAEVLFGTMMLASLGPVIISAIVAWLVSNLINHSDALLYNVQLSVTVQARDYALIISTGVLAGLCGPLLLTLMNACHRGFVSLKLAPPWQLALGGLIVGLLSLFTPAVWGNGYSTVQSFLTAPPLLMIIAGIFLCKLCAVLASSGSGAPGGVFTPTLFIGLAIGMLYGRSLGLWFPDGEEITLLLGLTGMATLLAATTHAPIMSTLMICEMTGEYQLLPGLLIACVIASVISRTLHRDSIYRQHTAQHS.

Over 1-4 (MFRR) the chain is Cytoplasmic. The helical transmembrane segment at 5-25 (LLIATVVGILAVFAVAGFRHA) threads the bilayer. Residues 26 to 53 (MLLLEWLFLNNDSGSLVNAATNLSSWRR) are Periplasmic-facing. Residues 54–74 (LLTPALGGLAAGLLLMGWQKF) traverse the membrane as a helical segment. Over 75 to 145 (TQQRPHAPTD…QRFTPRQEWK (71 aa)) the chain is Cytoplasmic. Residues 146–166 (LWIACGAAAGMAAAYRAPLAG) form a helical membrane-spanning segment. At 167–172 (SLFIAE) the chain is on the periplasmic side. Residues 173 to 193 (VLFGTMMLASLGPVIISAIVA) form a helical membrane-spanning segment. Residues 194-221 (WLVSNLINHSDALLYNVQLSVTVQARDY) are Cytoplasmic-facing. Residues 222–242 (ALIISTGVLAGLCGPLLLTLM) form a helical membrane-spanning segment. The Periplasmic segment spans residues 243-257 (NACHRGFVSLKLAPP). Residues 258 to 278 (WQLALGGLIVGLLSLFTPAVW) form a helical membrane-spanning segment. The Cytoplasmic portion of the chain corresponds to 279 to 290 (GNGYSTVQSFLT). A helical transmembrane segment spans residues 291–311 (APPLLMIIAGIFLCKLCAVLA). The Periplasmic segment spans residues 312–315 (SSGS). The helical transmembrane segment at 316-336 (GAPGGVFTPTLFIGLAIGMLY) threads the bilayer. Residues 337–351 (GRSLGLWFPDGEEIT) lie on the Cytoplasmic side of the membrane. Residues 352–372 (LLLGLTGMATLLAATTHAPIM) form a helical membrane-spanning segment. The Periplasmic portion of the chain corresponds to 373–379 (STLMICE). A helical transmembrane segment spans residues 380 to 400 (MTGEYQLLPGLLIACVIASVI). The Cytoplasmic segment spans residues 401 to 418 (SRTLHRDSIYRQHTAQHS).

It belongs to the chloride channel (TC 2.A.49) family. ClcB subfamily.

Its subcellular location is the cell inner membrane. Probably acts as an electrical shunt for an outwardly-directed proton pump that is linked to amino acid decarboxylation, as part of the extreme acid resistance (XAR) response. This is Voltage-gated ClC-type chloride channel ClcB (clcB) from Shigella flexneri.